The following is a 215-amino-acid chain: S-crystallin 2 (215 aa).

Residues 2-80 form the GST N-terminal domain; sequence PSYTLHYFNH…YLAREFGFHG (79 aa). Residues 82-215 form the GST C-terminal domain; the sequence is NNLDMARVDF…YLKSRSSTDF (134 aa).

Belongs to the GST superfamily. In terms of tissue distribution, lens.

S-crystallins are structural components of squids and octopi eye lens. Contains relatively little GST activity (1/1000 of that of mammalian GST enzyme). In Octopus vulgaris (Common octopus), this protein is S-crystallin 2 (OCTS2).